The sequence spans 93 residues: Small ribosomal subunit protein uS19 (93 aa).

It belongs to the universal ribosomal protein uS19 family.

Protein S19 forms a complex with S13 that binds strongly to the 16S ribosomal RNA. This Lacticaseibacillus paracasei (strain ATCC 334 / BCRC 17002 / CCUG 31169 / CIP 107868 / KCTC 3260 / NRRL B-441) (Lactobacillus paracasei) protein is Small ribosomal subunit protein uS19.